The primary structure comprises 272 residues: Oligodendrocyte transcription factor 3 (272 aa).

Residues 1-14 (MNSDSSSVSSRASS) are compositionally biased toward low complexity. The segment at 1–71 (MNSDSSSVSS…KAAGESSKYK (71 aa)) is disordered. Basic residues predominate over residues 24-33 (DHHHRHHHHQ). Positions 36-46 (RLNSVSSTQGD) are enriched in polar residues. Residues 68 to 89 (SKYKIKKQLSEQDLQQLRLKIN) adopt a coiled-coil conformation. The region spanning 83–137 (QLRLKINGRERKRMHDLNLAMDGLREVMPYAHGPSVRKLSKIATLLLARNYILML) is the bHLH domain.

The protein resides in the nucleus. May determine the distinct specification program of class A neurons in the dorsal part of the spinal cord and suppress specification of class B neurons. This Homo sapiens (Human) protein is Oligodendrocyte transcription factor 3 (OLIG3).